Consider the following 699-residue polypeptide: Keratinocyte proline-rich protein (699 aa).

S436 carries the phosphoserine modification. Pro residues-rich tracts occupy residues 448–477 and 513–533; these read PYPR…PSPE and DPCP…PSPE. A disordered region spans residues 448–533; the sequence is PYPRPEPCPS…PCPEPCPSPE (86 aa).

Expressed in the stratified squamous epithelial layers of the skin, esophagus and tongue.

It is found in the cytoplasm. The protein is Keratinocyte proline-rich protein (Kprp) of Rattus norvegicus (Rat).